The sequence spans 311 residues: Transcription factor MafB (311 aa).

Disordered stretches follow at residues 35-78 (PLGR…PTEQ) and 150-199 (EDLA…EDRF). Positions 54 to 76 (SVSSTPISTPCSSVPSSPSFSPT) are enriched in low complexity. A compositionally biased stretch (basic residues) spans 157 to 167 (HPHHHHHHHHQ). Low complexity predominate over residues 168 to 194 (ASPTPSTSSSSSQQLQTSHQQHPPSSS). Residues 226–251 (RLKQKRRTLKNRGYAQSCRYKRVQQK) are basic motif. In terms of domain architecture, bZIP spans 226 to 289 (RLKQKRRTLK…DAYKLKCEKL (64 aa)). The segment at 254–275 (LENEKTQLIQQVEQLKQEVTRL) is leucine-zipper.

This sequence belongs to the bZIP family. Maf subfamily. In terms of assembly, homodimer or heterodimer with other bHLH-Zip transcription factors. Binds DNA as a homodimer or heterodimer. Self-associates; the interaction requires the intact MAFB leucine-zipper domain. Interacts with FOS, HOXD12 and PRRX1. Expressed in brain, thymus, gut, lung, mesenterium, spleen, kidney, ovary and bursa.

It localises to the nucleus. Its function is as follows. Acts as a transcriptional activator or repressor. Positively regulates the expression of alpha-A crystallin genes during lens fiber cell differentiation. Binds to Maf recognition elements (MARE). The sequence is that of Transcription factor MafB (MAFB) from Gallus gallus (Chicken).